The chain runs to 602 residues: Beta-(1--&gt;2)glucan export ATP-binding/permease protein NdvA (602 aa).

Residues 21 to 306 enclose the ABC transmembrane type-1 domain; sequence GWLLAFANLL…VVSFINNVFM (286 aa). The next 6 membrane-spanning stretches (helical) occupy residues 22 to 42, 63 to 83, 141 to 161, 163 to 183, 240 to 262, and 280 to 300; these read WLLAFANLLLAASQFAEPVLF, FLAAWVAFGLFTIACSALVAL, EHFAAILSVVVLLPLSLYLNW, LAILLFVLCIVFTALTTFVVR, VLSWWALVTVITRASTTITVLAI, and IVMFVSFATLLIQKLEQVVSF. An ABC transporter domain is found at 340–573; sequence VEFNDVTFSY…GGHFAELARA (234 aa). 373–380 contributes to the ATP binding site; sequence GPTGAGKS.

Belongs to the ABC transporter superfamily. Beta-(1--&gt;2)glucan exporter (TC 3.A.1.108.1) family. In terms of assembly, homodimer.

It localises to the cell inner membrane. The enzyme catalyses [(1-&gt;2)-beta-D-glucosyl](n)(in) + ATP + H2O = [(1-&gt;2)-beta-D-glucosyl](n)(out) + ADP + phosphate + H(+). In terms of biological role, involved in beta-(1--&gt;2)glucan export. Transmembrane domains (TMD) form a pore in the inner membrane and the ATP-binding domain (NBD) is responsible for energy generation. This is Beta-(1--&gt;2)glucan export ATP-binding/permease protein NdvA from Bradyrhizobium diazoefficiens (strain JCM 10833 / BCRC 13528 / IAM 13628 / NBRC 14792 / USDA 110).